The chain runs to 183 residues: Adenine phosphoribosyltransferase (183 aa).

It belongs to the purine/pyrimidine phosphoribosyltransferase family. Homodimer.

Its subcellular location is the cytoplasm. The catalysed reaction is AMP + diphosphate = 5-phospho-alpha-D-ribose 1-diphosphate + adenine. The protein operates within purine metabolism; AMP biosynthesis via salvage pathway; AMP from adenine: step 1/1. In terms of biological role, catalyzes a salvage reaction resulting in the formation of AMP, that is energically less costly than de novo synthesis. The chain is Adenine phosphoribosyltransferase from Salmonella gallinarum (strain 287/91 / NCTC 13346).